A 129-amino-acid chain; its full sequence is Small ribosomal subunit protein uS9 (129 aa).

The interval 107-129 (SRVVERKKPGKKKARRSPQFSKR) is disordered. Over residues 114 to 129 (KPGKKKARRSPQFSKR) the composition is skewed to basic residues.

This sequence belongs to the universal ribosomal protein uS9 family.

In Sulfurovum sp. (strain NBC37-1), this protein is Small ribosomal subunit protein uS9.